A 169-amino-acid chain; its full sequence is Probable inosine/xanthosine triphosphatase (169 aa).

Position 58 (D58) interacts with Mg(2+).

Belongs to the YjjX NTPase family. Homodimer. It depends on Mg(2+) as a cofactor. Mn(2+) is required as a cofactor.

The enzyme catalyses XTP + H2O = XDP + phosphate + H(+). It carries out the reaction ITP + H2O = IDP + phosphate + H(+). Phosphatase that hydrolyzes non-canonical purine nucleotides such as XTP and ITP to their respective diphosphate derivatives. Probably excludes non-canonical purines from DNA/RNA precursor pool, thus preventing their incorporation into DNA/RNA and avoiding chromosomal lesions. The protein is Probable inosine/xanthosine triphosphatase of Archaeoglobus fulgidus (strain ATCC 49558 / DSM 4304 / JCM 9628 / NBRC 100126 / VC-16).